A 315-amino-acid polypeptide reads, in one-letter code: tRNA U34 carboxymethyltransferase (315 aa).

Carboxy-S-adenosyl-L-methionine contacts are provided by residues Lys79, Trp93, Lys98, Gly117, 142–144 (DPS), 169–170 (VE), Tyr193, and Arg307.

This sequence belongs to the class I-like SAM-binding methyltransferase superfamily. CmoB family. Homotetramer.

The enzyme catalyses carboxy-S-adenosyl-L-methionine + 5-hydroxyuridine(34) in tRNA = 5-carboxymethoxyuridine(34) in tRNA + S-adenosyl-L-homocysteine + H(+). In terms of biological role, catalyzes carboxymethyl transfer from carboxy-S-adenosyl-L-methionine (Cx-SAM) to 5-hydroxyuridine (ho5U) to form 5-carboxymethoxyuridine (cmo5U) at position 34 in tRNAs. The protein is tRNA U34 carboxymethyltransferase of Helicobacter hepaticus (strain ATCC 51449 / 3B1).